The sequence spans 156 residues: Endogenous retrovirus group K member 18 Pro protein (156 aa).

The Peptidase A2 domain occupies 21–96 (LEGLVDTGAD…IPLNLWGRDL (76 aa)). The active site involves Asp-26. The region spanning 111-156 (YSPMSQKIMTKMGYIPGKGLGKNEDGIKVPIEAKINHGREGTGYPF) is the G-patch domain.

It belongs to the peptidase A2 family. HERV class-II K(HML-2) subfamily. Active as a homodimer. Autoproteolytically processed at the N-terminus. Expected C-terminal autoprocessing not detected. The sequence shown is that of the processed Pro protein.

The enzyme catalyses Processing at the authentic HIV-1 PR recognition site and release of the mature p17 matrix and the p24 capsid protein, as a result of the cleavage of the -SQNY-|-PIVQ- cleavage site.. Retroviral proteases have roles in the processing of the primary translation products and the maturation of the viral particle. Endogenous Pro proteins may have kept, lost or modified their original function during evolution. The protein is Endogenous retrovirus group K member 18 Pro protein (ERVK-18) of Homo sapiens (Human).